Reading from the N-terminus, the 234-residue chain is Large ribosomal subunit protein uL1 (234 aa).

It belongs to the universal ribosomal protein uL1 family. As to quaternary structure, part of the 50S ribosomal subunit.

In terms of biological role, binds directly to 23S rRNA. The L1 stalk is quite mobile in the ribosome, and is involved in E site tRNA release. Protein L1 is also a translational repressor protein, it controls the translation of the L11 operon by binding to its mRNA. This Bartonella tribocorum (strain CIP 105476 / IBS 506) protein is Large ribosomal subunit protein uL1.